Consider the following 1700-residue polypeptide: uncharacterized protein (1700 aa).

The chain crosses the membrane as a helical span at residues 986–1006; that stretch reads APITQYPVLCYLLYLLSYYLV. 2 coiled-coil regions span residues 1246–1278 and 1657–1684; these read DQNA…REIK and QDMD…IEGD. Residues 1650–1700 form a disordered region; that stretch reads DTEPDIMQDMDGEPQEADELEDLKEEAESLDIEGDYFAEEDEDYAQEDFIE. A compositionally biased stretch (acidic residues) spans 1651 to 1700; sequence TEPDIMQDMDGEPQEADELEDLKEEAESLDIEGDYFAEEDEDYAQEDFIE.

Its subcellular location is the host membrane. The protein localises to the virion. This is an uncharacterized protein from Acanthamoeba polyphaga (Amoeba).